Consider the following 437-residue polypeptide: Enolase 1 (437 aa).

Gln164 lines the (2R)-2-phosphoglycerate pocket. Glu206 acts as the Proton donor in catalysis. Mg(2+) is bound by residues Asp244, Glu289, and Asp316. (2R)-2-phosphoglycerate-binding residues include Lys341, Arg370, Ser371, and Lys392. Lys341 serves as the catalytic Proton acceptor.

It belongs to the enolase family. The cofactor is Mg(2+).

Its subcellular location is the cytoplasm. It is found in the secreted. The protein localises to the cell surface. It catalyses the reaction (2R)-2-phosphoglycerate = phosphoenolpyruvate + H2O. It functions in the pathway carbohydrate degradation; glycolysis; pyruvate from D-glyceraldehyde 3-phosphate: step 4/5. Functionally, catalyzes the reversible conversion of 2-phosphoglycerate (2-PG) into phosphoenolpyruvate (PEP). It is essential for the degradation of carbohydrates via glycolysis. This Desulfitobacterium hafniense (strain Y51) protein is Enolase 1.